The chain runs to 183 residues: Small ribosomal subunit protein uS4c (183 aa).

Residues 82–143 (MRLDNILFRL…KQRSKALIQN (62 aa)) form the S4 RNA-binding domain.

This sequence belongs to the universal ribosomal protein uS4 family. In terms of assembly, part of the 30S ribosomal subunit. Contacts protein S5. The interaction surface between S4 and S5 is involved in control of translational fidelity.

The protein resides in the plastid. Its subcellular location is the chloroplast. Functionally, one of the primary rRNA binding proteins, it binds directly to 16S rRNA where it nucleates assembly of the body of the 30S subunit. In terms of biological role, with S5 and S12 plays an important role in translational accuracy. The sequence is that of Small ribosomal subunit protein uS4c (rps4) from Sparaxis sp. (strain Lejeune 1997).